The sequence spans 337 residues: Cathepsin L-like (337 aa).

A signal peptide spans methionine 1–serine 18. Positions alanine 19–glutamine 119 are cleaved as a propeptide — activation peptide. N-linked (GlcNAc...) asparagine glycosylation occurs at asparagine 108. Intrachain disulfides connect cysteine 141-cysteine 184, cysteine 175-cysteine 217, and cysteine 276-cysteine 326. Cysteine 144 is an active-site residue. Active-site residues include histidine 283 and asparagine 304.

Belongs to the peptidase C1 family. In terms of tissue distribution, expressed in intestine, pharynx posterior bulb, hypodermis and cuticle (at protein level). Expressed in germ cells, developing oocytes, sheath cells surrounding germ cells and oocytes, and in the eggshell (at protein level).

Its subcellular location is the secreted. The protein resides in the cytoplasmic granule. The protein localises to the lysosome. It is found in the endosome. It localises to the cytoplasmic vesicle. Its subcellular location is the phagosome. It catalyses the reaction Specificity close to that of papain. As compared to cathepsin B, cathepsin L exhibits higher activity toward protein substrates, but has little activity on Z-Arg-Arg-NHMec, and no peptidyl-dipeptidase activity.. In terms of biological role, cysteine protease which plays an essential role in the degradation of proteins in lysosomes. During early embryogenesis, maternally required for the proteolytic processing of yolk proteins in platelets, a lysosome-like structure where a slow and controlled degradation of yolk proteins occurs. In the gonad, required for the clearance of apoptotic germ cells in the engulfing cell phagolysosomes. In embryos, required for the degradation of endocytic and autophagic cargos. In embryos, may play a role in the degradation of lipid-containing droplets. Required for larval development. In Caenorhabditis elegans, this protein is Cathepsin L-like.